A 6359-amino-acid chain; its full sequence is Bacitracin synthase 3 (6359 aa).

The tract at residues 461–1034 (LHELFEEQAM…IKGLGEYIRS (574 aa)) is domain 1 (isoleucine-activating). Residues 941–953 (VDRKALPEPDRTA) show a composition bias toward basic and acidic residues. Positions 941–962 (VDRKALPEPDRTAGAENEYEAP) are disordered. 5 consecutive Carrier domains span residues 961–1036 (APRN…RSTK), 1993–2067 (APRN…KKQS), 3497–3572 (APRN…ESMK), 4539–4613 (PPRN…KAES), and 6047–6122 (PPRH…KHAQ). An O-(pantetheine 4'-phosphoryl)serine mark is found at Ser-996, Ser-2028, and Ser-3532. The interval 1517 to 2064 (FEDQTLTYRQ…RIKDLAKYVK (548 aa)) is domain 2 (D-phenylalanine-activating). Residues 2999–3570 (NKTIHQLFEE…IKDIGDFIES (572 aa)) form a domain 3 (histidine-activating) region. Residues 4047-4612 (EQTAVVYADE…KSLSRYVKAE (566 aa)) form a domain 4 (D-aspartic acid-activating) region. The disordered stretch occupies residues 4521–4544 (IDTAALPEPQPGKETEYEPPRNET). The segment covering 4531 to 4544 (PGKETEYEPPRNET) has biased composition (basic and acidic residues). Residues Ser-4574 and Ser-6082 each carry the O-(pantetheine 4'-phosphoryl)serine modification. The interval 5549–6129 (IHRLFEEQAE…HAQDLLKDYT (581 aa)) is domain 5 (asparagine-activating).

It belongs to the ATP-dependent AMP-binding enzyme family. As to quaternary structure, large multienzyme complex of BA1, BA2 and BA3. Pantetheine 4'-phosphate is required as a cofactor.

The enzyme catalyses L-aspartate = D-aspartate. It catalyses the reaction L-phenylalanine + ATP + H2O = D-phenylalanine + AMP + diphosphate + H(+). It functions in the pathway antibiotic biosynthesis; bacitracin biosynthesis. In terms of biological role, induces peptide synthesis, activates and incorporates five amino acids, forms a thiazoline ring between the first two amino acids and incorporates a D-glutamine in the fourth position. This chain is Bacitracin synthase 3 (bacC), found in Bacillus licheniformis.